A 314-amino-acid polypeptide reads, in one-letter code: Glutathione synthetase (314 aa).

The ATP-grasp domain occupies 125-309 (KLFVMNFPQL…VAAKVWDTIE (185 aa)). 151–207 (RDKHGAVVMKPLHGHGGAAVFRVMPQDMNFGSLFDMFTVTFKEPWVIQQFIPEVKHG) lines the ATP pocket. Residues E280 and N282 each contribute to the Mg(2+) site.

This sequence belongs to the prokaryotic GSH synthase family. Requires Mg(2+) as cofactor. It depends on Mn(2+) as a cofactor.

The enzyme catalyses gamma-L-glutamyl-L-cysteine + glycine + ATP = glutathione + ADP + phosphate + H(+). The protein operates within sulfur metabolism; glutathione biosynthesis; glutathione from L-cysteine and L-glutamate: step 2/2. This chain is Glutathione synthetase, found in Bradyrhizobium diazoefficiens (strain JCM 10833 / BCRC 13528 / IAM 13628 / NBRC 14792 / USDA 110).